A 525-amino-acid chain; its full sequence is Peptide chain release factor 3 (525 aa).

The tr-type G domain maps to 9 to 276; the sequence is AKRRTFAIIS…GFTRYAPAPQ (268 aa). Residues 18-25, 86-90, and 140-143 each bind GTP; these read SHPDAGKT, DTPGH, and NKFD.

This sequence belongs to the TRAFAC class translation factor GTPase superfamily. Classic translation factor GTPase family. PrfC subfamily.

The protein resides in the cytoplasm. Increases the formation of ribosomal termination complexes and stimulates activities of RF-1 and RF-2. It binds guanine nucleotides and has strong preference for UGA stop codons. It may interact directly with the ribosome. The stimulation of RF-1 and RF-2 is significantly reduced by GTP and GDP, but not by GMP. This is Peptide chain release factor 3 from Francisella tularensis subsp. tularensis (strain WY96-3418).